The primary structure comprises 376 residues: 1-acyl-sn-glycerol-3-phosphate acyltransferase gamma (376 aa).

Residues 1–124 (MGLLAYLKTQ…LGSSKVLAKR (124 aa)) are Cytoplasmic-facing. The HXXXXD motif signature appears at 96 to 101 (HNFEID). Residues 125–145 (ELLCVPLIGWTWYFLEIVFCK) form a helical membrane-spanning segment. Residues 146–316 (RKWEEDRDTV…TLLNFLCWAT (171 aa)) are Lumenal-facing. A helical transmembrane segment spans residues 317-339 (ILLSPLFSFVLGVFASGSPLLIL). The Cytoplasmic portion of the chain corresponds to 340–376 (TFLGFVGAASFGVRRLIGVTEIEKGSSYGNQELKKKE).

This sequence belongs to the 1-acyl-sn-glycerol-3-phosphate acyltransferase family. In terms of tissue distribution, widely expressed. Mainly expressed in testis, kidney and liver (at protein level).

Its subcellular location is the endoplasmic reticulum membrane. It localises to the nucleus envelope. The enzyme catalyses a 1-acyl-sn-glycero-3-phosphate + an acyl-CoA = a 1,2-diacyl-sn-glycero-3-phosphate + CoA. It catalyses the reaction pentadecanoyl-CoA + 1-(9Z-octadecenoyl)-sn-glycero-3-phosphate = 1-(9Z)-octadecenoyl-2-pentadecanoyl-sn-glycero-3-phosphate + CoA. The catalysed reaction is heptadecanoyl-CoA + 1-(9Z-octadecenoyl)-sn-glycero-3-phosphate = 1-(9Z)-octadecenoyl-2-heptadecanoyl-sn-glycero-3-phosphate + CoA. It carries out the reaction 1-(9Z-octadecenoyl)-sn-glycero-3-phosphate + octadecanoyl-CoA = 1-(9Z-octadecenoyl)-2-octadecanoyl-sn-glycero-3-phosphate + CoA. The enzyme catalyses nonadecanoyl-CoA + 1-(9Z-octadecenoyl)-sn-glycero-3-phosphate = 1-(9Z)-octadecenoyl-2-nonadecanoyl-sn-glycero-3-phosphate + CoA. It catalyses the reaction 1-(9Z-octadecenoyl)-sn-glycero-3-phosphate + (5Z,8Z,11Z,14Z)-eicosatetraenoyl-CoA = 1-(9Z)-octadecenoyl-2-(5Z,8Z,11Z,14Z)-eicosatetraenoyl-sn-glycero-3-phosphate + CoA. The catalysed reaction is 1-(9Z-octadecenoyl)-sn-glycero-3-phosphate + (9Z)-octadecenoyl-CoA = 1,2-di-(9Z-octadecenoyl)-sn-glycero-3-phosphate + CoA. It carries out the reaction 1-(9Z-octadecenoyl)-sn-glycero-3-phosphate + (9Z,12Z)-octadecadienoyl-CoA = 1-(9Z)-octadecenoyl-2-(9Z,12Z)-octadecadienoyl-sn-glycero-3-phosphate + CoA. The enzyme catalyses 1-(9Z-octadecenoyl)-sn-glycero-3-phosphocholine + (5Z,8Z,11Z,14Z)-eicosatetraenoyl-CoA = 1-(9Z)-octadecenoyl-2-(5Z,8Z,11Z,14Z)-icosatetraenoyl-sn-glycero-3-phosphocholine + CoA. It catalyses the reaction 1-(9Z-octadecenoyl)-sn-glycero-3-phospho-(1D-myo-inositol) + (5Z,8Z,11Z,14Z)-eicosatetraenoyl-CoA = 1-(9Z-octadecenoyl)-2-(5Z,8Z,11Z,14Z-eicosatetraenoyl)-sn-glycero-3-phospho-1D-myo-inositol + CoA. The catalysed reaction is 1-(9Z-octadecenoyl)-sn-glycero-3-phospho-L-serine + (5Z,8Z,11Z,14Z)-eicosatetraenoyl-CoA = 1-(9Z-octadecenoyl)-2-(5Z,8Z,11Z,14Z-eicosatetraenoyl)-sn-glycero-3-phospho-L-serine + CoA. It carries out the reaction 1-hexadecanoyl-sn-glycero-3-phosphate + (9Z)-octadecenoyl-CoA = 1-hexadecanoyl-2-(9Z-octadecenoyl)-sn-glycero-3-phosphate + CoA. The enzyme catalyses 1-hexadecanoyl-sn-glycero-3-phosphate + (5Z,8Z,11Z,14Z)-eicosatetraenoyl-CoA = 1-hexadecanoyl-2-(5Z,8Z,11Z,14Z-eicosatetraenoyl)-sn-glycero-3-phosphate + CoA. It catalyses the reaction 1-heptadecanoyl-sn-glycero-3-phosphate + (5Z,8Z,11Z,14Z)-eicosatetraenoyl-CoA = 1-heptadecanoyl-2-(5Z,8Z,11Z,14Z)-eicosatetraenoyl-sn-glycero-3-phosphate + CoA. The catalysed reaction is 1-octadecanoyl-sn-glycero-3-phosphate + (9Z)-octadecenoyl-CoA = 1-octadecanoyl-2-(9Z-octadecenoyl)-sn-glycero-3-phosphate + CoA. It carries out the reaction 1-octadecanoyl-sn-glycero-3-phosphate + (5Z,8Z,11Z,14Z)-eicosatetraenoyl-CoA = 1-octadecanoyl-2-(5Z,8Z,11Z,14Z-eicosatetraenoyl)-sn-glycero-3-phosphate + CoA. The enzyme catalyses 1-(9Z-octadecenoyl)-sn-glycero-3-phosphate + hexadecanoyl-CoA = 1-hexadecanoyl-2-(9Z-octadecenoyl)-sn-glycero-3-phosphate + CoA. It catalyses the reaction 1-O-(9Z-octadecenyl)-sn-glycero-3-phosphate + (5Z,8Z,11Z,14Z)-eicosatetraenoyl-CoA = 1-O-(9Z-octadecenyl)-2-(5Z,8Z,11Z,14Z-eicosatetraenoyl)-sn-glycero-3-phosphate + CoA. The catalysed reaction is a 1-acyl-sn-glycero-3-phospho-(1D-myo-inositol) + (5Z,8Z,11Z,14Z)-eicosatetraenoyl-CoA = a 1-acyl-2-(5Z,8Z,11Z,14Z-eicosatetraenoyl)-sn-glycero-3-phospho-(1D-myo-inositol) + CoA. It participates in phospholipid metabolism; CDP-diacylglycerol biosynthesis; CDP-diacylglycerol from sn-glycerol 3-phosphate: step 2/3. With respect to regulation, in males, activity increases in an age-dependent fashion, maybe derived from the induction by sex-hormones. Converts 1-acyl-sn-glycerol-3-phosphate (lysophosphatidic acid or LPA) into 1,2-diacyl-sn-glycerol-3-phosphate (phosphatidic acid or PA) by incorporating an acyl moiety at the sn-2 position of the glycerol backbone. Acts on LPA containing saturated or unsaturated fatty acids C16:0-C20:4 at the sn-1 position using C18:1, C20:4 or C18:2-CoA as the acyl donor. Also acts on lysophosphatidylcholine, lysophosphatidylinositol and lysophosphatidylserine using C18:1 or C20:4-CoA. Has a preference for arachidonoyl-CoA as a donor. Also has a modest lysophosphatidylinositol acyltransferase (LPIAT) activity, converts lysophosphatidylinositol (LPI) into phosphatidylinositol. In Mus musculus (Mouse), this protein is 1-acyl-sn-glycerol-3-phosphate acyltransferase gamma.